A 577-amino-acid polypeptide reads, in one-letter code: Arginine--tRNA ligase (577 aa).

The 'HIGH' region motif lies at 122–132 (PNVAKEMHVGH).

Belongs to the class-I aminoacyl-tRNA synthetase family. As to quaternary structure, monomer.

The protein localises to the cytoplasm. The catalysed reaction is tRNA(Arg) + L-arginine + ATP = L-arginyl-tRNA(Arg) + AMP + diphosphate. The polypeptide is Arginine--tRNA ligase (Escherichia coli O8 (strain IAI1)).